A 427-amino-acid polypeptide reads, in one-letter code: Enolase (427 aa).

Position 163 (Gln163) interacts with (2R)-2-phosphoglycerate. The Proton donor role is filled by Glu205. Mg(2+) contacts are provided by Asp242, Glu285, and Asp312. 4 residues coordinate (2R)-2-phosphoglycerate: Lys337, Arg366, Ser367, and Lys388. The active-site Proton acceptor is Lys337.

The protein belongs to the enolase family. Requires Mg(2+) as cofactor.

Its subcellular location is the cytoplasm. It localises to the secreted. The protein localises to the cell surface. The catalysed reaction is (2R)-2-phosphoglycerate = phosphoenolpyruvate + H2O. The protein operates within carbohydrate degradation; glycolysis; pyruvate from D-glyceraldehyde 3-phosphate: step 4/5. Functionally, catalyzes the reversible conversion of 2-phosphoglycerate (2-PG) into phosphoenolpyruvate (PEP). It is essential for the degradation of carbohydrates via glycolysis. This Albidiferax ferrireducens (strain ATCC BAA-621 / DSM 15236 / T118) (Rhodoferax ferrireducens) protein is Enolase.